Here is a 313-residue protein sequence, read N- to C-terminus: Leucine zipper protein 4 (313 aa).

Residues 1–119 (MASFRKLTLS…PLIEQEKCSD (119 aa)) form an interaction with DDX39B/UAP56 region. Disordered regions lie at residues 1–238 (MASF…QGDL) and 290–313 (QSGR…TITT). Positions 22–40 (KVNFLDMSLDDIIIYKELE) match the UAP56-binding motif (UBM); required for proper nuclear localization motif. The span at 34–60 (IIYKELEGTNAEEEKNKRQNHSKKESP) shows a compositional bias: basic and acidic residues. The segment at 51–80 (RQNHSKKESPSRQQSKAHRHRHRRGYSRCR) is arg-rich; required for RNA-binding. Over residues 65–77 (SKAHRHRHRRGYS) the composition is skewed to basic residues. A compositionally biased stretch (basic and acidic residues) spans 81–92 (SNSEEGNHDKKP). Over residues 126 to 141 (EKNQGQSEGNQHQSEG) the composition is skewed to polar residues. The span at 142 to 168 (NPDKSEESQGQPEENHHSERSRNHLER) shows a compositional bias: basic and acidic residues. Polar residues predominate over residues 169 to 179 (SLSQSDRSQGQ). Positions 178–236 (GQLKRHHPQYERSHGQYKRSHGQSERSHGHSERSHGHSERSHGHSERSHGHSKRSRSQG) are RS-containing His-rich (RS-H); necessary for nuclear localization. The span at 199–226 (GQSERSHGHSERSHGHSERSHGHSERSH) shows a compositional bias: basic and acidic residues. Position 234 is a phosphoserine (Ser-234). The interval 238–287 (LVDTQSDLIATQRDLIATQKDLIATQRDLIATQRDLIVTQRDLVATERDL) is leucine-zipper; required for RNA-binding and for its relocalization to the cytoplasm during cell division. Positions 241-313 (TQSDLIATQR…YSTGKNTITT (73 aa)) are interaction with NXF1. Positions 304 to 313 (YSTGKNTITT) are enriched in polar residues.

Interacts with NXF1, NXF2, THOC1, THOC5, DDX39B/UAP56 and SRRT. Expressed specifically in testis. Also expressed in a wide variety of cancer types, but particularly high levels of expression observed in melanoma cells.

Its subcellular location is the nucleus. It is found in the cytoplasm. In terms of biological role, export adapter involved in mRNA nuclear export in cancer cells. Binds and enhances the RNA-binding activity of the nuclear RNA export factor NXF1. Can restore mRNA export function in cells compromised by loss of mRNA export adapters. The polypeptide is Leucine zipper protein 4 (LUZP4) (Homo sapiens (Human)).